A 591-amino-acid polypeptide reads, in one-letter code: Developmental and secondary metabolism regulator VEA1 (591 aa).

Positions 1-22 are disordered; it reads MATKASSILHPPNETEHTMSRI. Positions 13–22 are enriched in basic and acidic residues; that stretch reads NETEHTMSRI. In terms of domain architecture, Velvet spans 26-235; the sequence is GKKLTYNLKV…AEQGCRVRIR (210 aa). A Nuclear localization signal motif is present at residues 40-45; sequence ERARAC. The interval 238–547 is disordered; the sequence is VRMRRREPKP…TSGGSDDEIM (310 aa). A compositionally biased stretch (basic and acidic residues) spans 245-260; it reads PKPNKDYGAYDDRRIT. Residues 306 to 321 show a composition bias toward polar residues; sequence HQQPSPNLAATPQSHL. Pro residues predominate over residues 330-347; that stretch reads YHAPPPPPTAHPAPPPAY. Positions 386 to 395 are enriched in polar residues; sequence YDQSKSSLPM. The span at 422 to 433 shows a compositional bias: low complexity; sequence PSQLHPTQQYQQ. Residues 434–448 show a composition bias toward pro residues; it reads PTPPPPPPAAIAPHP. Residues 452-493 form a PEST region; it reads RTPTKPSPSTFFPPTPSRLSVEVDSSNEADDAILNAIRTRRG. Residues 494–516 are compositionally biased toward basic and acidic residues; it reads YILDEKSGATKRSRDSSDHDLKP.

It belongs to the velvet family. VeA subfamily. In terms of assembly, component of the heterotrimeric velvet complex composed of LAE1, VEA1 and VEL2; VEA1 acting as a bridging protein between LAE1 and VEL2.

Its subcellular location is the nucleus. It is found in the cytoplasm. Functionally, component of the velvet transcription factor complex that controls sexual/asexual developmental ratio in response to light, promoting sexual development in the darkness while stimulating asexual sporulation under illumination. The velvet complex hat acts as a global regulator for secondary metabolite gene expression. Regulates cleistothecial formation and hyphal growth. Acts as a positive regulator of virulence. The sequence is that of Developmental and secondary metabolism regulator VEA1 from Ajellomyces capsulatus (Darling's disease fungus).